The primary structure comprises 292 residues: 2-dehydro-3-deoxygalactonokinase (292 aa).

This sequence belongs to the DgoK family.

It carries out the reaction 2-dehydro-3-deoxy-D-galactonate + ATP = 2-dehydro-3-deoxy-6-phospho-D-galactonate + ADP + H(+). It participates in carbohydrate acid metabolism; D-galactonate degradation; D-glyceraldehyde 3-phosphate and pyruvate from D-galactonate: step 2/3. This chain is 2-dehydro-3-deoxygalactonokinase (dgoK), found in Escherichia coli (strain K12).